Consider the following 998-residue polypeptide: Beta-galactosidase (998 aa).

E431 functions as the Proton donor in the catalytic mechanism. Residue E508 is the Nucleophile of the active site.

The protein belongs to the glycosyl hydrolase 2 family.

The enzyme catalyses Hydrolysis of terminal non-reducing beta-D-galactose residues in beta-D-galactosides.. The sequence is that of Beta-galactosidase (lacZ) from Lactococcus lactis subsp. lactis (strain IL1403) (Streptococcus lactis).